We begin with the raw amino-acid sequence, 456 residues long: tRNA-2-methylthio-N(6)-dimethylallyladenosine synthase (456 aa).

In terms of domain architecture, MTTase N-terminal spans lysine 2–arginine 119. [4Fe-4S] cluster-binding residues include cysteine 11, cysteine 48, cysteine 82, cysteine 156, cysteine 160, and cysteine 163. The Radical SAM core domain maps to arginine 142–arginine 375. A TRAM domain is found at glutamine 378 to glutamate 448.

This sequence belongs to the methylthiotransferase family. MiaB subfamily. Monomer. It depends on [4Fe-4S] cluster as a cofactor.

The protein localises to the cytoplasm. The catalysed reaction is N(6)-dimethylallyladenosine(37) in tRNA + (sulfur carrier)-SH + AH2 + 2 S-adenosyl-L-methionine = 2-methylsulfanyl-N(6)-dimethylallyladenosine(37) in tRNA + (sulfur carrier)-H + 5'-deoxyadenosine + L-methionine + A + S-adenosyl-L-homocysteine + 2 H(+). Catalyzes the methylthiolation of N6-(dimethylallyl)adenosine (i(6)A), leading to the formation of 2-methylthio-N6-(dimethylallyl)adenosine (ms(2)i(6)A) at position 37 in tRNAs that read codons beginning with uridine. The chain is tRNA-2-methylthio-N(6)-dimethylallyladenosine synthase from Ralstonia pickettii (strain 12J).